Reading from the N-terminus, the 187-residue chain is Protein ECM23 (187 aa).

Disordered stretches follow at residues 106–127 and 167–187; these read GKKSLAGYRPKSRKKQTILPNG and KKIRSQQSSDDGTKNFIFKNK. The segment at 126–180 adopts a GATA-type zinc-finger fold; the sequence is NGQPKECATCGDTWTSQWRSGPNGNVELCSRCGIAYRKKMEKKIRSQQSSDDGTK.

Functionally, involved in morphogenesis. May be involved in cell wall organization and biogenesis. This is Protein ECM23 (ECM23) from Saccharomyces cerevisiae (strain ATCC 204508 / S288c) (Baker's yeast).